Consider the following 295-residue polypeptide: Small ribosomal subunit protein uS2B (295 aa).

S2 carries the N-acetylserine modification. An interaction with PPP1R16B region spans residues 54-113; the sequence is TWEKLLLAARAIVAIENPADVSVISSRNTGQRAVLKFAAATGATPIAGRFTPGTFTNQIQ. Laminin-binding stretches follow at residues 161-180 and 205-229; these read IPCN…MLAR and RDPE…EFQG. The segment covering 218-227 has biased composition (basic and acidic residues); that stretch reads AEKAVTKEEF. The disordered stretch occupies residues 218 to 242; it reads AEKAVTKEEFQGEWTAPSPEFTATQ. [DE]-W-[ST] repeat units follow at residues 230–232, 247–249, 266–268, 275–277, and 293–295; these read EWT and DWS. Residues 242-295 form a laminin-binding region; the sequence is QPEVADWSEGVQVPSVPIQQFPTEDWSAQPATEDWSAAPTAQATEWVGATTDWS. A disordered region spans residues 266 to 295; it reads DWSAQPATEDWSAAPTAQATEWVGATTDWS.

It belongs to the universal ribosomal protein uS2 family. Monomer (37LRP) and homodimer (67LR). Component of the small ribosomal subunit. Mature ribosomes consist of a small (40S) and a large (60S) subunit. The 40S subunit contains about 33 different proteins and 1 molecule of RNA (18S). The 60S subunit contains about 49 different proteins and 3 molecules of RNA (28S, 5.8S and 5S). Interacts with RPS21. Interacts with several laminins including at least LAMB1. Interacts with MDK. The mature dimeric form interacts with PPP1R16B (via its fourth ankyrin repeat). Interacts with PPP1CA only in the presence of PPP1R16B. In terms of processing, acylated. Acylation may be a prerequisite for conversion of the monomeric 37 kDa laminin receptor precursor (37LRP) to the mature dimeric 67 kDa laminin receptor (67LR), and may provide a mechanism for membrane association. Post-translationally, cleaved by stromelysin-3 (ST3) at the cell surface. Cleavage by stromelysin-3 may be a mechanism to alter cell-extracellular matrix interactions.

It localises to the cell membrane. The protein resides in the cytoplasm. It is found in the nucleus. Required for the assembly and/or stability of the 40S ribosomal subunit. Required for the processing of the 20S rRNA-precursor to mature 18S rRNA in a late step of the maturation of 40S ribosomal subunits. Also functions as a cell surface receptor for laminin. Plays a role in cell adhesion to the basement membrane and in the consequent activation of signaling transduction pathways. May play a role in cell fate determination and tissue morphogenesis. Also acts as a receptor for several other ligands, including the pathogenic prion protein, viruses, and bacteria. Acts as a PPP1R16B-dependent substrate of PPP1CA. This chain is Small ribosomal subunit protein uS2B, found in Homo sapiens (Human).